A 398-amino-acid polypeptide reads, in one-letter code: Phosphoglycerate kinase (398 aa).

Substrate is bound by residues 21 to 23 (DFN), Arg36, 59 to 62 (HLGR), Arg119, and Arg157. ATP is bound by residues Lys208, Gly296, Glu327, and 354-357 (GGDS).

Belongs to the phosphoglycerate kinase family. Monomer.

Its subcellular location is the cytoplasm. The enzyme catalyses (2R)-3-phosphoglycerate + ATP = (2R)-3-phospho-glyceroyl phosphate + ADP. Its pathway is carbohydrate degradation; glycolysis; pyruvate from D-glyceraldehyde 3-phosphate: step 2/5. In Lactococcus lactis subsp. cremoris (strain MG1363), this protein is Phosphoglycerate kinase.